The following is a 301-amino-acid chain: tRNA dimethylallyltransferase (301 aa).

8–15 serves as a coordination point for ATP; that stretch reads GPTAVGKT. Position 10 to 15 (10 to 15) interacts with substrate; the sequence is TAVGKT. Positions 33-36 are interaction with substrate tRNA; the sequence is DSRQ.

It belongs to the IPP transferase family. Monomer. Mg(2+) is required as a cofactor.

The catalysed reaction is adenosine(37) in tRNA + dimethylallyl diphosphate = N(6)-dimethylallyladenosine(37) in tRNA + diphosphate. Functionally, catalyzes the transfer of a dimethylallyl group onto the adenine at position 37 in tRNAs that read codons beginning with uridine, leading to the formation of N6-(dimethylallyl)adenosine (i(6)A). The chain is tRNA dimethylallyltransferase from Thermosipho africanus (strain TCF52B).